The primary structure comprises 306 residues: GTP cyclohydrolase FolE2 (306 aa).

This sequence belongs to the GTP cyclohydrolase IV family.

The enzyme catalyses GTP + H2O = 7,8-dihydroneopterin 3'-triphosphate + formate + H(+). It participates in cofactor biosynthesis; 7,8-dihydroneopterin triphosphate biosynthesis; 7,8-dihydroneopterin triphosphate from GTP: step 1/1. Functionally, converts GTP to 7,8-dihydroneopterin triphosphate. The polypeptide is GTP cyclohydrolase FolE2 (Xanthomonas oryzae pv. oryzae (strain MAFF 311018)).